Consider the following 249-residue polypeptide: Probable transcriptional regulatory protein LIC_12886 (249 aa).

The protein belongs to the TACO1 family.

The protein resides in the cytoplasm. This Leptospira interrogans serogroup Icterohaemorrhagiae serovar copenhageni (strain Fiocruz L1-130) protein is Probable transcriptional regulatory protein LIC_12886.